Here is a 508-residue protein sequence, read N- to C-terminus: NAD(P)H-quinone oxidoreductase subunit 2 B, chloroplastic (508 aa).

13 helical membrane passes run 24 to 44, 59 to 79, 99 to 119, 124 to 144, 149 to 169, 184 to 204, 227 to 247, 295 to 315, 323 to 343, 354 to 374, 395 to 415, 418 to 438, and 482 to 502; these read LLLF…GLIL, WLYF…LFRW, IFQF…VEYI, MAIT…MFLC, FITI…LSGY, LLMG…LYGL, PGIS…LSPA, WHLL…LIAI, MLAY…IVGD, YMLF…LFGL, ALSL…AGFF, LYLF…IGLL, and MIVC…IIAI.

The protein belongs to the complex I subunit 2 family. In terms of assembly, NDH is composed of at least 16 different subunits, 5 of which are encoded in the nucleus.

The protein resides in the plastid. It is found in the chloroplast thylakoid membrane. It carries out the reaction a plastoquinone + NADH + (n+1) H(+)(in) = a plastoquinol + NAD(+) + n H(+)(out). The catalysed reaction is a plastoquinone + NADPH + (n+1) H(+)(in) = a plastoquinol + NADP(+) + n H(+)(out). Functionally, NDH shuttles electrons from NAD(P)H:plastoquinone, via FMN and iron-sulfur (Fe-S) centers, to quinones in the photosynthetic chain and possibly in a chloroplast respiratory chain. The immediate electron acceptor for the enzyme in this species is believed to be plastoquinone. Couples the redox reaction to proton translocation, and thus conserves the redox energy in a proton gradient. This Ipomoea purpurea (Common morning glory) protein is NAD(P)H-quinone oxidoreductase subunit 2 B, chloroplastic.